The following is a 79-amino-acid chain: Beta-defensin 15 (79 aa).

An N-terminal signal peptide occupies residues 1–20; it reads MKTFLFLFAVLFFLDPAKNA. Intrachain disulfides connect C26-C53, C33-C47, and C37-C54.

The protein belongs to the beta-defensin family. In terms of tissue distribution, expressed in testis and to a lesser extent in epididymis (caput, corpus and cauda). Also weakly expressed in kidneys and colon.

The protein localises to the secreted. Has antibacterial activity. In Mus musculus (Mouse), this protein is Beta-defensin 15 (Defb15).